A 158-amino-acid chain; its full sequence is Ribosome maturation factor RimP (158 aa).

Belongs to the RimP family.

The protein localises to the cytoplasm. In terms of biological role, required for maturation of 30S ribosomal subunits. The sequence is that of Ribosome maturation factor RimP from Pseudomonas syringae pv. tomato (strain ATCC BAA-871 / DC3000).